An 89-amino-acid chain; its full sequence is Large ribosomal subunit protein eL31 (89 aa).

The protein belongs to the eukaryotic ribosomal protein eL31 family.

The chain is Large ribosomal subunit protein eL31 (rpl31e) from Thermoplasma acidophilum (strain ATCC 25905 / DSM 1728 / JCM 9062 / NBRC 15155 / AMRC-C165).